The sequence spans 344 residues: L-rhamnose-proton symporter (344 aa).

Helical transmembrane passes span 4 to 24 (AITM…CFYA), 38 to 58 (WSVG…ALLL), 68 to 88 (FNLS…IGNI), 101 to 121 (MGIG…TPII), 137 to 157 (TLLG…AGQL), 175 to 195 (LLLA…MNAA), 214 to 234 (LPSY…FCFI), 259 to 279 (ILLS…YAWG), 290 to 310 (MSWM…GLVL), and 321 to 341 (VAVL…VGLG).

It belongs to the L-rhamnose transporter (TC 2.A.7.6) family.

It localises to the cell inner membrane. The enzyme catalyses L-rhamnopyranose(in) + H(+)(in) = L-rhamnopyranose(out) + H(+)(out). In terms of biological role, uptake of L-rhamnose across the cytoplasmic membrane with the concomitant transport of protons into the cell (symport system). The polypeptide is L-rhamnose-proton symporter (Salmonella dublin (strain CT_02021853)).